A 471-amino-acid polypeptide reads, in one-letter code: Transcription initiation factor TFIID subunit 7-like (471 aa).

3 disordered regions span residues 1–84, 192–211, and 328–377; these read MERG…RQGT, SPEG…TGPT, and EMMG…EELE. Phosphoserine is present on Ser-199. Acidic residues predominate over residues 347-377; sequence GDDDDDEDEDDEDYGNEKEEEETDNSEEELE. The stretch at 358–433 forms a coiled coil; sequence EDYGNEKEEE…QKELLRKVEN (76 aa).

This sequence belongs to the TAF7 family. As to quaternary structure, TFIID is composed of TATA binding protein (TBP) and a number of TBP-associated factors (TAFs). TAF7L may replace TAF7 in a spermatogenesis-specific form of TFIID. Interacts with TBP; the interaction occurs in a sub-population of cells (pachytene and haploid round spermatids) and is developmentally regulated through differential intracellular localization of the two proteins. Interacts with TAF1. Testis-specific (at protein level). Expressed during spermatogenesis from spermatogonia stage up to the stage of round spermatids.

Its subcellular location is the nucleus. The protein resides in the cytoplasm. Functionally, probably functions as a spermatogenesis-specific component of the DNA-binding general transcription factor complex TFIID, a multimeric protein complex that plays a central role in mediating promoter responses to various activators and repressors. May play a role in spermatogenesis. The polypeptide is Transcription initiation factor TFIID subunit 7-like (Taf7l) (Mus musculus (Mouse)).